The primary structure comprises 286 residues: DegV domain-containing protein M6_Spy1658 (286 aa).

In terms of domain architecture, DegV spans 3–282 (FTIMTDSTAD…PNTLAVFVIG (280 aa)). Hexadecanoate contacts are provided by T62 and S94.

Its function is as follows. May bind long-chain fatty acids, such as palmitate, and may play a role in lipid transport or fatty acid metabolism. The chain is DegV domain-containing protein M6_Spy1658 from Streptococcus pyogenes serotype M6 (strain ATCC BAA-946 / MGAS10394).